Reading from the N-terminus, the 212-residue chain is Ras-related protein Rab-21 (212 aa).

GTP-binding positions include 14–21 (GEGCVGKT), 62–66 (DTAGQ), and 120–123 (NKCD). The tract at residues 181-212 (TNTTGQTTNRSERIPIVPDSDSGNKQPGCCSN) is disordered. Polar residues predominate over residues 201-212 (DSGNKQPGCCSN). 2 S-geranylgeranyl cysteine lipidation sites follow: C209 and C210.

Belongs to the small GTPase superfamily. Rab family. As to quaternary structure, interacts with LIM domain proteins limF and ChLim.

Its subcellular location is the cell membrane. Its function is as follows. Involved in the regulation of phagocytosis. This is Ras-related protein Rab-21 (rab21) from Dictyostelium discoideum (Social amoeba).